We begin with the raw amino-acid sequence, 976 residues long: Vacuolar membrane protease (976 aa).

The Cytoplasmic portion of the chain corresponds to 1–15; sequence MKLKSVFRSVLKYRK. The helical transmembrane segment at 16-36 threads the bilayer; sequence TNLSLLLLITYSIITLLYIFD. Residues 37 to 359 are Vacuolar-facing; the sequence is HERYKLNLPK…KFFVISAKTL (323 aa). Residues Asn96 and Asn121 are each glycosylated (N-linked (GlcNAc...) asparagine). Residues His156 and Asp168 each coordinate Zn(2+). N-linked (GlcNAc...) asparagine glycosylation is present at Asn189. The active-site Proton acceptor is Glu200. Zn(2+) is bound at residue Glu201. N-linked (GlcNAc...) asparagine glycans are attached at residues Asn212 and Asn217. Glu226 and His300 together coordinate Zn(2+). Residues 360–380 form a helical membrane-spanning segment; sequence FYWNCIFLLVSPVVAIGLYLI. The Cytoplasmic portion of the chain corresponds to 381-392; sequence SRDRMTWKSHSW. The chain crosses the membrane as a helical span at residues 393–412; it reads LSWTRFPLSLAAGIIVQKLF. The Vacuolar segment spans residues 413 to 428; the sequence is SNDIIRSNPLTFSRNY. A helical transmembrane segment spans residues 429–449; the sequence is FWPISAFFTQVIFTSYVLINC. The Cytoplasmic portion of the chain corresponds to 450–461; sequence SNFFFPCADMKS. Residues 462–482 form a helical membrane-spanning segment; it reads LSIIELFIILWTILLFTSKLL. Topologically, residues 483–496 are vacuolar; the sequence is YSSDYRYTGLYPLS. Residues 497–517 traverse the membrane as a helical segment; sequence IFFLLSTIAAILRLLALALGM. The Cytoplasmic segment spans residues 518–627; it reads RTRKRLGREC…NSLKLEYTDY (110 aa). Positions 528–610 are disordered; sequence RDHHSNYSSH…PLLKGSNSME (83 aa). Residues 549–558 show a composition bias toward polar residues; the sequence is NLEQPQDQFT. The span at 559–570 shows a compositional bias: low complexity; it reads SSQDDQASIQDD. Positions 582–601 are enriched in basic and acidic residues; the sequence is NVDEDHGMDSSSQQHDERVP. The chain crosses the membrane as a helical span at residues 628–648; that stretch reads AWIIQFLLIVPIPSFILFNSV. The Vacuolar segment spans residues 649-668; that stretch reads DVIMDALNHTVQEGSKATFD. N-linked (GlcNAc...) asparagine glycosylation occurs at Asn656. Residues 669 to 689 form a helical membrane-spanning segment; sequence VLRFGMVGSILMALPILPFFY. Residues 690-692 are Cytoplasmic-facing; sequence KVN. Residues 693–713 traverse the membrane as a helical segment; sequence YITISLTALLFLISASKTLLV. The Vacuolar portion of the chain corresponds to 714–976; it reads HPFTNSNPLK…LVIVKDAIIL (263 aa). Residues Asn768, Asn796, Asn811, Asn866, and Asn937 are each glycosylated (N-linked (GlcNAc...) asparagine).

This sequence belongs to the peptidase M28 family. It depends on Zn(2+) as a cofactor.

It localises to the vacuole membrane. Functionally, may be involved in vacuolar sorting and osmoregulation. The sequence is that of Vacuolar membrane protease from Saccharomyces cerevisiae (strain RM11-1a) (Baker's yeast).